Reading from the N-terminus, the 336-residue chain is MDAWAVQFGNASKVSPFEGEQYHIAPKWAFYLQAAFMGFVFIVGTPMNGIVLFVTMKYKKLRQPLNYILVNISLAGFIFDTFSVSQVFVCAARGYYFLGYTLCAMEAAMGSIAGLVTGWSLAVLAFERYVVICKPFGSFKFGQGQAVGAVVFTWIIGTACATPPFFGWSRYIPEGLGTACGPDWYTKSEEYNSESYTYFLLITCFMMPMTIIIFSYSQLLGALRAVAAQQAESESTQKAEREVSRMVVVMVGSFVLCYAPYAVTAMYFANSDEPNKDYRLVAIPAFFSKSSCVYNPLIYAFMNKQFNACIMETVFGKKIDESSEVSSKTETSSVSA.

Over 1 to 29 (MDAWAVQFGNASKVSPFEGEQYHIAPKWA) the chain is Extracellular. A glycan (N-linked (GlcNAc...) asparagine) is linked at Asn10. The chain crosses the membrane as a helical span at residues 30-54 (FYLQAAFMGFVFIVGTPMNGIVLFV). The Cytoplasmic portion of the chain corresponds to 55–66 (TMKYKKLRQPLN). Residues 67–91 (YILVNISLAGFIFDTFSVSQVFVCA) traverse the membrane as a helical segment. The Extracellular segment spans residues 92-106 (ARGYYFLGYTLCAME). Cys103 and Cys180 are disulfide-bonded. Residues 107–126 (AAMGSIAGLVTGWSLAVLAF) form a helical membrane-spanning segment. Topologically, residues 127-145 (ERYVVICKPFGSFKFGQGQ) are cytoplasmic. The helical transmembrane segment at 146-169 (AVGAVVFTWIIGTACATPPFFGWS) threads the bilayer. Residues 170–195 (RYIPEGLGTACGPDWYTKSEEYNSES) are Extracellular-facing. The chain crosses the membrane as a helical span at residues 196–223 (YTYFLLITCFMMPMTIIIFSYSQLLGAL). At 224-245 (RAVAAQQAESESTQKAEREVSR) the chain is on the cytoplasmic side. Residues 246-269 (MVVVMVGSFVLCYAPYAVTAMYFA) traverse the membrane as a helical segment. At 270–277 (NSDEPNKD) the chain is on the extracellular side. A helical membrane pass occupies residues 278-302 (YRLVAIPAFFSKSSCVYNPLIYAFM). Lys289 carries the post-translational modification N6-(retinylidene)lysine. Residues 303–336 (NKQFNACIMETVFGKKIDESSEVSSKTETSSVSA) lie on the Cytoplasmic side of the membrane.

Belongs to the G-protein coupled receptor 1 family. Opsin subfamily. Post-translationally, phosphorylated on some or all of the serine and threonine residues present in the C-terminal region. Retinal short single cones, outer and inner segments.

Its subcellular location is the membrane. Functionally, visual pigments are the light-absorbing molecules that mediate vision. They consist of an apoprotein, opsin, covalently linked to cis-retinal. The chain is Opsin-1, short-wave-sensitive 1 (opn1sw1) from Danio rerio (Zebrafish).